Here is an 883-residue protein sequence, read N- to C-terminus: Phosphoenolpyruvate carboxylase (883 aa).

Catalysis depends on residues His138 and Lys546.

Belongs to the PEPCase type 1 family. Requires Mg(2+) as cofactor.

The catalysed reaction is oxaloacetate + phosphate = phosphoenolpyruvate + hydrogencarbonate. Its function is as follows. Forms oxaloacetate, a four-carbon dicarboxylic acid source for the tricarboxylic acid cycle. The protein is Phosphoenolpyruvate carboxylase of Salmonella dublin (strain CT_02021853).